Reading from the N-terminus, the 247-residue chain is Caffeoyl-CoA O-methyltransferase 2 (247 aa).

Substrate is bound at residue K21. S-adenosyl-L-methionine contacts are provided by residues T63, E85, 87–88 (GV), S93, D111, and A140. D163 contacts substrate. D163 contacts a divalent metal cation. D165 lines the S-adenosyl-L-methionine pocket. The a divalent metal cation site is built by D189 and N190. N194 provides a ligand contact to substrate.

The protein belongs to the class I-like SAM-binding methyltransferase superfamily. Cation-dependent O-methyltransferase family. CCoAMT subfamily. A divalent metal cation serves as cofactor.

The catalysed reaction is (E)-caffeoyl-CoA + S-adenosyl-L-methionine = (E)-feruloyl-CoA + S-adenosyl-L-homocysteine + H(+). It functions in the pathway aromatic compound metabolism; phenylpropanoid biosynthesis. In terms of biological role, methylates caffeoyl-CoA to feruloyl-CoA and 5-hydroxyferuloyl-CoA to sinapoyl-CoA. Plays a role in the synthesis of feruloylated polysaccharides. Involved in the reinforcement of the plant cell wall. Also involved in the responding to wounding or pathogen challenge by the increased formation of cell wall-bound ferulic acid polymers. In Populus trichocarpa (Western balsam poplar), this protein is Caffeoyl-CoA O-methyltransferase 2 (CCOAOMT2).